A 92-amino-acid polypeptide reads, in one-letter code: Small ribosomal subunit protein uS19 (92 aa).

Belongs to the universal ribosomal protein uS19 family.

Protein S19 forms a complex with S13 that binds strongly to the 16S ribosomal RNA. The chain is Small ribosomal subunit protein uS19 from Brucella ovis (strain ATCC 25840 / 63/290 / NCTC 10512).